We begin with the raw amino-acid sequence, 307 residues long: D-alanine--D-alanine ligase (307 aa).

Positions 101-301 (KTVMRAAGVS…FGELVRWMVE (201 aa)) constitute an ATP-grasp domain. 127 to 182 (PLTPPYVVKPIAEGSSMGVIIVRDERSHPPQILASDEWVYGEEVLAETYVAGRELT) is a binding site for ATP. Mg(2+)-binding residues include Asp251, Glu268, and Asn270.

The protein belongs to the D-alanine--D-alanine ligase family. Requires Mg(2+) as cofactor. Mn(2+) serves as cofactor.

It is found in the cytoplasm. The enzyme catalyses 2 D-alanine + ATP = D-alanyl-D-alanine + ADP + phosphate + H(+). It participates in cell wall biogenesis; peptidoglycan biosynthesis. Functionally, cell wall formation. The chain is D-alanine--D-alanine ligase from Methylorubrum extorquens (strain PA1) (Methylobacterium extorquens).